We begin with the raw amino-acid sequence, 670 residues long: Leucine-rich repeat-containing protein 45 (670 aa).

5 LRR repeats span residues 87–108 (TVKS…ALGK), 115–136 (SIRS…FSFF), 145–166 (FLQR…ELAM), 173–194 (SLQE…ALLN), and 201–223 (TLKK…VEQA). Residues 234–645 (LSETQNRTSV…ISRMKEEEAQ (412 aa)) adopt a coiled-coil conformation.

Homomer.

It is found in the cytoplasm. Its subcellular location is the cytoskeleton. It localises to the microtubule organizing center. The protein resides in the centrosome. Its function is as follows. Component of the proteinaceous fiber-like linker between two centrioles, required for centrosome cohesion. The sequence is that of Leucine-rich repeat-containing protein 45 (LRRC45) from Gallus gallus (Chicken).